A 192-amino-acid chain; its full sequence is Spermatogenesis-associated protein 3 (192 aa).

A compositionally biased stretch (basic residues) spans 1–15; the sequence is MKKVKKKRSEARRHR. Disordered stretches follow at residues 1–65 and 161–184; these read MKKV…TTSR and SRKP…GSGG. Positions 19 to 59 are enriched in low complexity; sequence SQHASSNSTSQQPSPESTPQQPSPESTPQQPSPESTPQHSS.

It localises to the cell projection. It is found in the cilium. The protein resides in the flagellum. In Homo sapiens (Human), this protein is Spermatogenesis-associated protein 3 (SPATA3).